The primary structure comprises 361 residues: tRNA 2-selenouridine synthase (361 aa).

The Rhodanese domain maps to 14-137 (LIADTPIIDV…LRQTAIQATI (124 aa)). C97 functions as the S-selanylcysteine intermediate in the catalytic mechanism.

This sequence belongs to the SelU family. As to quaternary structure, monomer.

The enzyme catalyses 5-methylaminomethyl-2-thiouridine(34) in tRNA + selenophosphate + (2E)-geranyl diphosphate + H2O + H(+) = 5-methylaminomethyl-2-selenouridine(34) in tRNA + (2E)-thiogeraniol + phosphate + diphosphate. It catalyses the reaction 5-methylaminomethyl-2-thiouridine(34) in tRNA + (2E)-geranyl diphosphate = 5-methylaminomethyl-S-(2E)-geranyl-thiouridine(34) in tRNA + diphosphate. The catalysed reaction is 5-methylaminomethyl-S-(2E)-geranyl-thiouridine(34) in tRNA + selenophosphate + H(+) = 5-methylaminomethyl-2-(Se-phospho)selenouridine(34) in tRNA + (2E)-thiogeraniol. It carries out the reaction 5-methylaminomethyl-2-(Se-phospho)selenouridine(34) in tRNA + H2O = 5-methylaminomethyl-2-selenouridine(34) in tRNA + phosphate. Functionally, involved in the post-transcriptional modification of the uridine at the wobble position (U34) of tRNA(Lys), tRNA(Glu) and tRNA(Gln). Catalyzes the conversion of 2-thiouridine (S2U-RNA) to 2-selenouridine (Se2U-RNA). Acts in a two-step process involving geranylation of 2-thiouridine (S2U) to S-geranyl-2-thiouridine (geS2U) and subsequent selenation of the latter derivative to 2-selenouridine (Se2U) in the tRNA chain. This chain is tRNA 2-selenouridine synthase, found in Escherichia coli O6:H1 (strain CFT073 / ATCC 700928 / UPEC).